The sequence spans 117 residues: Large ribosomal subunit protein bL20 (117 aa).

This sequence belongs to the bacterial ribosomal protein bL20 family.

Functionally, binds directly to 23S ribosomal RNA and is necessary for the in vitro assembly process of the 50S ribosomal subunit. It is not involved in the protein synthesizing functions of that subunit. The protein is Large ribosomal subunit protein bL20 of Rickettsia canadensis (strain McKiel).